The sequence spans 252 residues: Imidazole glycerol phosphate synthase subunit HisF (252 aa).

Catalysis depends on residues Asp-11 and Asp-130.

It belongs to the HisA/HisF family. As to quaternary structure, heterodimer of HisH and HisF.

The protein resides in the cytoplasm. The enzyme catalyses 5-[(5-phospho-1-deoxy-D-ribulos-1-ylimino)methylamino]-1-(5-phospho-beta-D-ribosyl)imidazole-4-carboxamide + L-glutamine = D-erythro-1-(imidazol-4-yl)glycerol 3-phosphate + 5-amino-1-(5-phospho-beta-D-ribosyl)imidazole-4-carboxamide + L-glutamate + H(+). Its pathway is amino-acid biosynthesis; L-histidine biosynthesis; L-histidine from 5-phospho-alpha-D-ribose 1-diphosphate: step 5/9. IGPS catalyzes the conversion of PRFAR and glutamine to IGP, AICAR and glutamate. The HisF subunit catalyzes the cyclization activity that produces IGP and AICAR from PRFAR using the ammonia provided by the HisH subunit. The chain is Imidazole glycerol phosphate synthase subunit HisF from Acinetobacter baumannii (strain AB307-0294).